Reading from the N-terminus, the 471-residue chain is Putative multidrug resistance protein MdtD (471 aa).

The Periplasmic portion of the chain corresponds to 1-11 (MTDLPDSTRWQ). The chain crosses the membrane as a helical span at residues 12 to 32 (LWIVAFGFFMQSLDTTIVNTA). The Cytoplasmic segment spans residues 33–48 (LPSMAQSLGESPLHMH). Residues 49-69 (MVIVSYVLTVAVMLPASGWLA) form a helical membrane-spanning segment. Residues 70–76 (DKVGVRN) are Periplasmic-facing. A helical membrane pass occupies residues 77 to 97 (IFFTAIVLFTLGSLFCALSGT). At 98 to 101 (LNEL) the chain is on the cytoplasmic side. The chain crosses the membrane as a helical span at residues 102-124 (LLARALQGVGGAMMVPVGRLTVM). The Periplasmic portion of the chain corresponds to 125 to 137 (KIVPREQYMAAMT). The helical transmembrane segment at 138-158 (FVTLPGQVGPLLGPALGGLLV) threads the bilayer. The Cytoplasmic portion of the chain corresponds to 159–164 (EYASWH). A helical transmembrane segment spans residues 165 to 185 (WIFLINIPVGIIGAIATLMLM). The Periplasmic portion of the chain corresponds to 186 to 196 (PNYTMQTRRFD). Residues 197-217 (LSGFLLLAVGMAVLTLALDGS) traverse the membrane as a helical segment. Over 218–224 (KGTGLSP) the chain is Cytoplasmic. Residues 225 to 245 (LAIAGLVAVGVVALVLYLLHA) traverse the membrane as a helical segment. Topologically, residues 246–262 (RNNNRALFSLKLFRTRT) are periplasmic. Residues 263–283 (FSLGLAGSFAGRIGSGMLPFM) form a helical membrane-spanning segment. Over 284–285 (TP) the chain is Cytoplasmic. A helical transmembrane segment spans residues 286–306 (VFLQIGLGFSPFHAGLMMIPM). The Periplasmic portion of the chain corresponds to 307 to 341 (VLGSMGMKRIVVQVVNRFGYRRVLVATTLGLSLVT). Residues 342 to 362 (MLFMTTALLGWYYVLPFVLFL) traverse the membrane as a helical segment. Over 363-395 (QGMVNSTRFSSMNTLTLKDLPDNLASSGNSLLS) the chain is Cytoplasmic. The helical transmembrane segment at 396-416 (MIMQLSMSIGVTIAGLLLGLF) threads the bilayer. Over 417–430 (GSQHVSVDSGTTQT) the chain is Periplasmic. Residues 431–451 (VFMYTWLSMAFIIALPAFIFA) form a helical membrane-spanning segment. Topologically, residues 452 to 471 (RVPNDTHQNVAISRRKRSAQ) are cytoplasmic.

It belongs to the major facilitator superfamily. TCR/Tet family.

The protein resides in the cell inner membrane. The protein is Putative multidrug resistance protein MdtD of Escherichia coli O7:K1 (strain IAI39 / ExPEC).